Reading from the N-terminus, the 136-residue chain is Psoriasis susceptibility 1 candidate gene 2 protein homolog (136 aa).

The signal sequence occupies residues 1–22 (MILNWKLLGILVLCLHTRGISG). The disordered stretch occupies residues 20–136 (ISGSEDHPSH…DLDPPREEYR (117 aa)). Residues 23-33 (SEDHPSHPPAE) show a composition bias toward basic and acidic residues. Pro residues-rich tracts occupy residues 44 to 74 (PQGPPVPGDPWPGAPPLFEDPPPPHPSPPWR) and 83 to 116 (PPEPPRTDPPQPPRPDDPWPAGPQPPENPWPPAP). The segment covering 117–136 (EVDHRPQEEPDLDPPREEYR) has biased composition (basic and acidic residues).

It localises to the secreted. The chain is Psoriasis susceptibility 1 candidate gene 2 protein homolog (PSORS1C2) from Pan troglodytes (Chimpanzee).